We begin with the raw amino-acid sequence, 704 residues long: Elongation factor G 1 (704 aa).

A tr-type G domain is found at 8–291 (ERYRNIGISA…AVIDYLPSPA (284 aa)). GTP contacts are provided by residues 17 to 24 (AHIDAGKT), 88 to 92 (DTPGH), and 142 to 145 (NKMD).

It belongs to the TRAFAC class translation factor GTPase superfamily. Classic translation factor GTPase family. EF-G/EF-2 subfamily.

The protein localises to the cytoplasm. Its function is as follows. Catalyzes the GTP-dependent ribosomal translocation step during translation elongation. During this step, the ribosome changes from the pre-translocational (PRE) to the post-translocational (POST) state as the newly formed A-site-bound peptidyl-tRNA and P-site-bound deacylated tRNA move to the P and E sites, respectively. Catalyzes the coordinated movement of the two tRNA molecules, the mRNA and conformational changes in the ribosome. The protein is Elongation factor G 1 of Burkholderia pseudomallei (strain 1710b).